Consider the following 238-residue polypeptide: Purine nucleoside phosphorylase DeoD-type (238 aa).

Residue histidine 4 coordinates a purine D-ribonucleoside. Residues glycine 20, arginine 24, arginine 43, and 87 to 90 contribute to the phosphate site; that span reads RVGS. A purine D-ribonucleoside-binding positions include 179–181 and 203–204; these read EME and SD. Residue aspartate 204 is the Proton donor of the active site.

The protein belongs to the PNP/UDP phosphorylase family. In terms of assembly, homohexamer; trimer of homodimers.

The enzyme catalyses a purine D-ribonucleoside + phosphate = a purine nucleobase + alpha-D-ribose 1-phosphate. It catalyses the reaction a purine 2'-deoxy-D-ribonucleoside + phosphate = a purine nucleobase + 2-deoxy-alpha-D-ribose 1-phosphate. Catalyzes the reversible phosphorolytic breakdown of the N-glycosidic bond in the beta-(deoxy)ribonucleoside molecules, with the formation of the corresponding free purine bases and pentose-1-phosphate. This chain is Purine nucleoside phosphorylase DeoD-type, found in Haemophilus influenzae (strain PittGG).